We begin with the raw amino-acid sequence, 141 residues long: Pheromone-binding protein-related protein 6 (141 aa).

Positions 1-16 (MVKYPLILLLIGCAAA) are cleaved as a signal peptide. Cystine bridges form between cysteine 41–cysteine 72, cysteine 68–cysteine 120, and cysteine 111–cysteine 129.

This sequence belongs to the PBP/GOBP family. As to expression, antenna. Mostly expressed in two types of sensory hairs, sensilla trichodea and small sensilla basiconica, in the ventro-lateral region of the third antennal segment (at protein level).

The protein localises to the secreted. This is Pheromone-binding protein-related protein 6 (Obp83b) from Drosophila melanogaster (Fruit fly).